The chain runs to 104 residues: Co-chaperonin GroES 5 (104 aa).

The protein belongs to the GroES chaperonin family. As to quaternary structure, heptamer of 7 subunits arranged in a ring. Interacts with the chaperonin GroEL.

It is found in the cytoplasm. Functionally, together with the chaperonin GroEL, plays an essential role in assisting protein folding. The GroEL-GroES system forms a nano-cage that allows encapsulation of the non-native substrate proteins and provides a physical environment optimized to promote and accelerate protein folding. GroES binds to the apical surface of the GroEL ring, thereby capping the opening of the GroEL channel. This Rhizobium meliloti (strain 1021) (Ensifer meliloti) protein is Co-chaperonin GroES 5.